The sequence spans 319 residues: tRNA U34 carboxymethyltransferase (319 aa).

Residues K88, W102, K107, G126, 176-177 (LE), M192, Y196, and R311 contribute to the carboxy-S-adenosyl-L-methionine site.

It belongs to the class I-like SAM-binding methyltransferase superfamily. CmoB family. Homotetramer.

It catalyses the reaction carboxy-S-adenosyl-L-methionine + 5-hydroxyuridine(34) in tRNA = 5-carboxymethoxyuridine(34) in tRNA + S-adenosyl-L-homocysteine + H(+). Its function is as follows. Catalyzes carboxymethyl transfer from carboxy-S-adenosyl-L-methionine (Cx-SAM) to 5-hydroxyuridine (ho5U) to form 5-carboxymethoxyuridine (cmo5U) at position 34 in tRNAs. The chain is tRNA U34 carboxymethyltransferase from Pseudomonas savastanoi pv. phaseolicola (strain 1448A / Race 6) (Pseudomonas syringae pv. phaseolicola (strain 1448A / Race 6)).